The primary structure comprises 478 residues: Solute carrier family 49 member 4 (478 aa).

Positions 1 to 27 (MGSGWSSEEEERQPLLGPGLGPAPGAT) are disordered. Residues 1–51 (MGSGWSSEEEERQPLLGPGLGPAPGATRRGREAAAVLPAAGPSPGRVYGRR) are Cytoplasmic-facing. The Di-leucine motif; mediates lysosomal localization motif lies at 15–16 (LL). A helical transmembrane segment spans residues 52-72 (WLVLLLFSLLAFAQGLVWNTW). Residues 73–89 (GPIQNSARQAYSFTGWD) are Lumenal-facing. A helical transmembrane segment spans residues 90–110 (IALLVLWGPIGFLPCFAFMWL). The Cytoplasmic portion of the chain corresponds to 111-117 (LDKRGLR). Residues 118–138 (ITVLLTSFLMVLGTGLRCIPV) form a helical membrane-spanning segment. The Lumenal segment spans residues 139–152 (SDLTLKKRLIHGGQ). A helical membrane pass occupies residues 153–173 (ILNGLAGPTVMNAAPFLSTTW). At 174–184 (FSADERATATA) the chain is on the cytoplasmic side. A helical transmembrane segment spans residues 185–205 (IASMLSYLGGACAFLVGPLVV). The Lumenal segment spans residues 206 to 229 (PAPNGTAPLLTAESSRDHIKDRIE). Asn209 carries N-linked (GlcNAc...) asparagine glycosylation. Residues 230-250 (TVLYAEFGVVCLIFSATLAYF) traverse the membrane as a helical segment. The Cytoplasmic segment spans residues 251–281 (PPRPPLPPSVAAASQRLSYRRSFCRLLSNLR). Residues 282–302 (FLMIALAYAIPLGVFAGWSGV) form a helical membrane-spanning segment. Topologically, residues 303–314 (LDLILTPVHVSQ) are lumenal. A helical transmembrane segment spans residues 315-335 (VDAGWIGFWSIVGGCVVGIAM). Topologically, residues 336–347 (ARFADFIRGMLK) are cytoplasmic. A helical membrane pass occupies residues 348–368 (LILLLLFSGATLSSTWFTLTC). Residues 369–384 (LNSVTHLPLTTVTLYA) are Lumenal-facing. The helical transmembrane segment at 385–405 (SCILLGVFLNSSVPIFFELFV) threads the bilayer. At 406–414 (ETVYPVPEG) the chain is on the cytoplasmic side. A helical membrane pass occupies residues 415–435 (ITCGVVTFLSNMFMGVLLFFV). Topologically, residues 436–442 (TFYHTEL) are lumenal. Residues 443-463 (SWFNWCLPGSCLLSLLLILCF) traverse the membrane as a helical segment. At 464-478 (RESYDRLYLDVVVSV) the chain is on the cytoplasmic side.

Belongs to the major facilitator superfamily. In terms of processing, cleaved in lysosomes by cathepsin L between Leu-214 and Ala-261, generating a N-glycosylated N-terminal and a non-glycosylated C-terminal fragment.

The protein localises to the lysosome membrane. The enzyme catalyses pyridoxine(out) + n H(+)(out) = pyridoxine(in) + n H(+)(in). Functionally, mediates H(+)-dependent pyridoxine transport. The sequence is that of Solute carrier family 49 member 4 (Slc49a4) from Rattus norvegicus (Rat).